A 108-amino-acid chain; its full sequence is Insertion element IS629 uncharacterized 12 kDa protein S4062 (108 aa).

Belongs to the transposase 8 family.

This chain is Insertion element IS629 uncharacterized 12 kDa protein S4062, found in Shigella flexneri.